The chain runs to 160 residues: Transcription antitermination protein NusB (160 aa).

Belongs to the NusB family.

Its function is as follows. Involved in transcription antitermination. Required for transcription of ribosomal RNA (rRNA) genes. Binds specifically to the boxA antiterminator sequence of the ribosomal RNA (rrn) operons. The sequence is that of Transcription antitermination protein NusB from Rhizobium etli (strain ATCC 51251 / DSM 11541 / JCM 21823 / NBRC 15573 / CFN 42).